The sequence spans 99 residues: Translation initiation factor 1A (99 aa).

The S1-like domain maps to 11-84 (RRVRTPRRGE…EKADIVWRYT (74 aa)).

The protein belongs to the eIF-1A family.

Seems to be required for maximal rate of protein biosynthesis. Enhances ribosome dissociation into subunits and stabilizes the binding of the initiator Met-tRNA(I) to 40 S ribosomal subunits. The sequence is that of Translation initiation factor 1A (eIF1A) from Methanothermobacter thermautotrophicus (strain ATCC 29096 / DSM 1053 / JCM 10044 / NBRC 100330 / Delta H) (Methanobacterium thermoautotrophicum).